The sequence spans 102 residues: ACAATCGSVCYTSSAISAAQEAGYDLYSANDDVSNYPHEYRNYEGFDFPVSGTYYEFPILRSGAVYSGNSPGADRVVFNGNDQLAGVITHTGASGNNFVACD.

2 disulfide bridges follow: cysteine 2–cysteine 10 and cysteine 6–cysteine 101. The active site involves histidine 38. The Proton acceptor role is filled by glutamate 56. The Proton donor role is filled by histidine 90.

The protein belongs to the ribonuclease N1/T1 family.

The enzyme catalyses [RNA] containing guanosine + H2O = an [RNA fragment]-3'-guanosine-3'-phosphate + a 5'-hydroxy-ribonucleotide-3'-[RNA fragment].. The chain is Guanyl-specific ribonuclease Pc from Penicillium chrysogenum (Penicillium notatum).